Here is a 103-residue protein sequence, read N- to C-terminus: Small ribosomal subunit protein uS10 (103 aa).

This sequence belongs to the universal ribosomal protein uS10 family. As to quaternary structure, part of the 30S ribosomal subunit.

Involved in the binding of tRNA to the ribosomes. The sequence is that of Small ribosomal subunit protein uS10 from Borrelia recurrentis (strain A1).